Consider the following 254-residue polypeptide: 3-deoxy-manno-octulosonate cytidylyltransferase (254 aa).

It belongs to the KdsB family.

The protein resides in the cytoplasm. The enzyme catalyses 3-deoxy-alpha-D-manno-oct-2-ulosonate + CTP = CMP-3-deoxy-beta-D-manno-octulosonate + diphosphate. It participates in nucleotide-sugar biosynthesis; CMP-3-deoxy-D-manno-octulosonate biosynthesis; CMP-3-deoxy-D-manno-octulosonate from 3-deoxy-D-manno-octulosonate and CTP: step 1/1. The protein operates within bacterial outer membrane biogenesis; lipopolysaccharide biosynthesis. Functionally, activates KDO (a required 8-carbon sugar) for incorporation into bacterial lipopolysaccharide in Gram-negative bacteria. This Pseudomonas putida (strain W619) protein is 3-deoxy-manno-octulosonate cytidylyltransferase.